The following is a 391-amino-acid chain: O-methyltransferase ATR12 (391 aa).

S-adenosyl-L-methionine is bound by residues 233 to 234 (GG), aspartate 259, and 279 to 280 (DF). Histidine 299 acts as the Proton acceptor in catalysis.

Belongs to the class I-like SAM-binding methyltransferase superfamily. Cation-independent O-methyltransferase family. COMT subfamily.

Its pathway is mycotoxin biosynthesis. Its function is as follows. O-methyltransferase; part of the core atranone cluster (CAC) which products are predicted to catalyze most or all steps of mycotoxin atranone synthesis, starting from geranylgeranyl pyrophosphate (GGPP). The initial cyclization of GGPP to dolabellane is probably performed by the terpene cyclase ATR13. The Baeyer-Villiger oxidation near the end of the atranone synthesis, which converts atranones D and E to atranones F and G is predicted to be catalyzed by the monooxygenase ATR8. Of the CAC's other predicted gene products, the reducing PKS ATR6 might synthesize a polyketide chain. This polyketide is probably transferred onto the atranone backbone by the polyketide transferase ATR5. Other predicted CAC products include 4 oxygenases (ATR2, ATR3, ATR4, and ATR14), 3 short-chain reductases (ATR7, ATR9, and ATR10), and a methyltransferase (ATR12). These may all be involved in the various steps of atranone biosynthesis, although their specific roles must await experimental determination. The polypeptide is O-methyltransferase ATR12 (Stachybotrys chlorohalonatus (strain IBT 40285)).